The chain runs to 212 residues: Redox-sensing transcriptional repressor Rex (212 aa).

The segment at residues 17 to 56 is a DNA-binding region (H-T-H motif); that stretch reads KYHRYLQELMENDVDRISSKELSEKIGFTASQIRQDLNCF. 91–96 serves as a coordination point for NAD(+); sequence GAGNIG.

Belongs to the transcriptional regulatory Rex family. As to quaternary structure, homodimer.

Its subcellular location is the cytoplasm. Modulates transcription in response to changes in cellular NADH/NAD(+) redox state. The protein is Redox-sensing transcriptional repressor Rex of Clostridium perfringens (strain ATCC 13124 / DSM 756 / JCM 1290 / NCIMB 6125 / NCTC 8237 / Type A).